We begin with the raw amino-acid sequence, 232 residues long: MTQHMIEIKSPYFLREESLASPADFAAVFGNRNPLVLEIGCGIGDFVTQLASSAPERNYLAIDIYNKGCNKTCNRLEQARLTNVRVMRIEARYLLEQFLATESLAAVYINCPDPWPKKRHLKRRLVNERFLQTLLHYLQPGGELFFSSDVADYAHAVTAHLNQIKGYENRLPVPVALDMAGYPLSKYMRRFLAQGQSIHFIHHRRNPQHTCETAAPQPVHRGFRTAWSANNG.

Residues Glu-38, Asp-63, Glu-90, and Asp-113 each contribute to the S-adenosyl-L-methionine site. Asp-113 is a catalytic residue. Lys-117 and Asp-149 together coordinate substrate.

This sequence belongs to the class I-like SAM-binding methyltransferase superfamily. TrmB family.

The enzyme catalyses guanosine(46) in tRNA + S-adenosyl-L-methionine = N(7)-methylguanosine(46) in tRNA + S-adenosyl-L-homocysteine. Its pathway is tRNA modification; N(7)-methylguanine-tRNA biosynthesis. Functionally, catalyzes the formation of N(7)-methylguanine at position 46 (m7G46) in tRNA. This is tRNA (guanine-N(7)-)-methyltransferase from Syntrophotalea carbinolica (strain DSM 2380 / NBRC 103641 / GraBd1) (Pelobacter carbinolicus).